A 278-amino-acid polypeptide reads, in one-letter code: 3-methyl-2-oxobutanoate hydroxymethyltransferase (278 aa).

Aspartate 43 and aspartate 82 together coordinate Mg(2+). Residues 43–44 (DS), aspartate 82, and lysine 112 each bind 3-methyl-2-oxobutanoate. Glutamate 114 is a binding site for Mg(2+). Residue glutamate 181 is the Proton acceptor of the active site.

The protein belongs to the PanB family. Homodecamer; pentamer of dimers. Mg(2+) is required as a cofactor.

It localises to the cytoplasm. The enzyme catalyses 3-methyl-2-oxobutanoate + (6R)-5,10-methylene-5,6,7,8-tetrahydrofolate + H2O = 2-dehydropantoate + (6S)-5,6,7,8-tetrahydrofolate. It functions in the pathway cofactor biosynthesis; (R)-pantothenate biosynthesis; (R)-pantoate from 3-methyl-2-oxobutanoate: step 1/2. Catalyzes the reversible reaction in which hydroxymethyl group from 5,10-methylenetetrahydrofolate is transferred onto alpha-ketoisovalerate to form ketopantoate. The polypeptide is 3-methyl-2-oxobutanoate hydroxymethyltransferase (Desulfitobacterium hafniense (strain Y51)).